The chain runs to 679 residues: tRNA uridine 5-carboxymethylaminomethyl modification enzyme MnmG (679 aa).

G15–G20 contributes to the FAD binding site. An NAD(+)-binding site is contributed by G314 to F328.

The protein belongs to the MnmG family. Homodimer. Heterotetramer of two MnmE and two MnmG subunits. Requires FAD as cofactor.

It is found in the cytoplasm. NAD-binding protein involved in the addition of a carboxymethylaminomethyl (cmnm) group at the wobble position (U34) of certain tRNAs, forming tRNA-cmnm(5)s(2)U34. In Roseiflexus sp. (strain RS-1), this protein is tRNA uridine 5-carboxymethylaminomethyl modification enzyme MnmG.